A 213-amino-acid polypeptide reads, in one-letter code: Hemolysin-3 homolog (213 aa).

The next 7 membrane-spanning stretches (helical) occupy residues 11–31, 41–61, 75–95, 103–123, 127–147, 157–177, and 185–205; these read AITH…LIIF, IVSF…STLL, IIDH…FLLG, FTLL…KIFF, FILL…IAVK, GFSL…FYIW, and AIWH…VLFY.

It belongs to the UPF0073 (Hly-III) family.

The protein localises to the cell membrane. This chain is Hemolysin-3 homolog (yplQ), found in Bacillus subtilis (strain 168).